A 508-amino-acid chain; its full sequence is Kinesin light chain 3 (508 aa).

A disordered region spans residues 1–20; sequence MSVQVAAPGSTGLGPERLNP. Residues 88–150 are a coiled coil; the sequence is LLALSAHVSV…EEEKSHLQFL (63 aa). The tract at residues 154 to 197 is disordered; sequence RQYDPPEESQRPESPPRRDSLASLFPSEEEEKKGPEAAGAAAAQ. Basic and acidic residues predominate over residues 161–173; it reads ESQRPESPPRRDS. Ser173 carries the phosphoserine modification. TPR repeat units follow at residues 207 to 240, 249 to 282, 291 to 324, 333 to 366, and 375 to 408; these read LRTL…LERS, ATML…REQT, AATL…REKV, AKQL…YEAL, and AKTK…EALP. The segment at 409-441 is disordered; that stretch reads APLGAPQGGTAGDTQQQVLRRSSSFSKLRESIR. The segment covering 420 to 434 has biased composition (polar residues); it reads GDTQQQVLRRSSSFS. Ser467 carries the post-translational modification Phosphoserine. The disordered stretch occupies residues 486-508; the sequence is LSTRHLSEAPRTLSISTQDLSPR. Residues 498–508 show a composition bias toward polar residues; sequence LSISTQDLSPR. Residue Thr502 is modified to Phosphothreonine. Ser506 carries the post-translational modification Phosphoserine.

The protein belongs to the kinesin light chain family. In terms of assembly, oligomer composed of two heavy chains and two light chains. Associates with microtubulin in an ATP-dependent manner. Interacts with KIF5C. Interacts with ODF1. Interacts with LRGUK. Interacts with VDAC2. In terms of tissue distribution, expressed in postmeiotic male germ cells (at protein level). Expressed in the testes (at protein level). Expressed in spleen, intestine, brain and ovary.

It localises to the cytoplasm. Its subcellular location is the cytoskeleton. It is found in the mitochondrion. Kinesin is a microtubule-associated force-producing protein that may play a role in organelle transport. Plays a role during spermiogenesis in the development of the sperm tail midpiece and in the normal function of spermatozoa. May play a role in the formation of the mitochondrial sheath formation in the developing spermatid midpiece. In Mus musculus (Mouse), this protein is Kinesin light chain 3 (Klc3).